Here is a 323-residue protein sequence, read N- to C-terminus: MQCSRVLGIEGTAWSLSAAIVGWDKVYAEASHPYVPETGGIHPMAAAQHHASHVSQIVRQVLDSGYDFDGVAFSRGPGLGPCLRTVATAARALALAYDVPLMGVNHCVAHIEVGRWQTGCHDPVVLYVSGANSQVIAFRRGRYRVFGETLDIGIGNALDKFGRHLGLQHPGGPKIEALAREGKNYIHLPYVVKGMDLSYSGMMSAAKEAAAKYLKEDVCFSLQENAFAMLVEVTERALAHTGKNEVLIGGGVGANMRLQSMLDTMCRDRGAKFYAPPRKFFGDNGSMIAYTGLLQLKYDQTIPVEDSAVNPIYRTDEVEIPWL.

Fe cation-binding residues include His106, His110, and Tyr127. Substrate is bound by residues 127–131 (YVSGA), Asp159, Gly172, Glu176, and Asn255. Asp283 is a binding site for Fe cation.

Belongs to the KAE1 / TsaD family. In terms of assembly, monomer. Component of the KEOPS complex that consists of Kae1, Bud32, Cgi121 and Pcc1; the whole complex dimerizes. It depends on Fe(2+) as a cofactor.

The protein localises to the cytoplasm. The enzyme catalyses L-threonylcarbamoyladenylate + adenosine(37) in tRNA = N(6)-L-threonylcarbamoyladenosine(37) in tRNA + AMP + H(+). Required for the formation of a threonylcarbamoyl group on adenosine at position 37 (t(6)A37) in tRNAs that read codons beginning with adenine. Is a component of the KEOPS complex that is probably involved in the transfer of the threonylcarbamoyl moiety of threonylcarbamoyl-AMP (TC-AMP) to the N6 group of A37. Kae1 likely plays a direct catalytic role in this reaction, but requires other protein(s) of the complex to fulfill this activity. The sequence is that of tRNA N6-adenosine threonylcarbamoyltransferase from Methanocella arvoryzae (strain DSM 22066 / NBRC 105507 / MRE50).